The following is a 96-amino-acid chain: Protein YddL (96 aa).

An N-terminal signal peptide occupies residues 1–21 (MKLKIVAVVVTGLLAANVAHA).

The polypeptide is Protein YddL (yddL) (Escherichia coli (strain K12)).